Here is a 324-residue protein sequence, read N- to C-terminus: Cathepsin L-like proteinase (324 aa).

A signal peptide spans 1–16 (MKLIIALAALIVVINA). Cystine bridges form between Cys131-Cys174, Cys165-Cys206, and Cys263-Cys312. Residue Cys134 is part of the active site. Residues His270 and Asn290 contribute to the active site.

Belongs to the peptidase C1 family. As to expression, expressed in larval carcasses and gut, and adult gut.

In Phaedon cochleariae (Mustard beetle), this protein is Cathepsin L-like proteinase.